Here is a 1614-residue protein sequence, read N- to C-terminus: Low-density lipoprotein receptor-related protein 5 (1614 aa).

The signal sequence occupies residues 1–30 (METAPTRAPPPPPPPLLLLVLYCSLVPAAA). The segment at 31–287 (SPLLLFANRR…YSPMDIQVLS (257 aa)) is beta-propeller 1. Residues 31–1383 (SPLLLFANRR…PPSDDIPAHS (1353 aa)) lie on the Extracellular side of the membrane. LDL-receptor class B repeat units follow at residues 74-118 (GAVY…DWVG), 119-161 (KKLY…DPAH), 162-205 (GYMY…DLEE), 206-246 (QKLY…TLSG), and 247-289 (DTLY…LSQE). 2 N-linked (GlcNAc...) asparagine glycosylation sites follow: Asn92 and Asn137. The EGF-like 1 domain maps to 294-336 (FHTPCEEDNGGCSHLCLLSPREPFYSCACPTGVQLQDNGKTCK). 3 cysteine pairs are disulfide-bonded: Cys298/Cys309, Cys305/Cys320, and Cys322/Cys335. The tract at residues 340 to 601 (EEVLLLARRT…AVNVAKVVGT (262 aa)) is beta-propeller 2. LDL-receptor class B repeat units follow at residues 384 to 426 (GYVY…DWVA), 427 to 469 (RNLY…HPVM), 470 to 513 (GLMY…DLQE), 514 to 556 (GKLY…LGDF), and 557 to 599 (IYWT…AKVV). 2 N-linked (GlcNAc...) asparagine glycosylation sites follow: Asn445 and Asn498. The 41-residue stretch at 600-640 (GTNPCADGNGGCSHLCFFTPRATKCGCPIGLELLSDMKTCI) folds into the EGF-like 2 domain. 3 disulfide bridges follow: Cys604–Cys615, Cys611–Cys624, and Cys626–Cys639. Residues 643–902 (EAFLVFTSRA…VFHSSRQDGL (260 aa)) form a beta-propeller 3 region. LDL-receptor class B repeat units follow at residues 686–728 (NHIY…DWMG), 729–771 (KNLY…DPTK), 772–814 (GYIY…DYAD), 815–854 (QRLY…TQYS), and 855–897 (DYIY…FHSS). Asn704 is a glycosylation site (N-linked (GlcNAc...) asparagine). The N-linked (GlcNAc...) asparagine glycan is linked to Asn877. One can recognise an EGF-like 3 domain in the interval 901–941 (GLNDCVHSNGQCGQLCLAIPGGHRCGCASHYTLDPSSRNCS). Intrachain disulfides connect Cys905-Cys916, Cys912-Cys925, and Cys927-Cys940. The tract at residues 944–1211 (STFLLFSQKF…AVEEVSLEEF (268 aa)) is beta-propeller 4. 5 LDL-receptor class B repeats span residues 988–1034 (KFIY…DIYS), 1035–1077 (RTLF…NAER), 1078–1122 (GYMY…DNAL), 1123–1164 (GKLF…VLGR), and 1165–1206 (HLYW…VEEV). The segment at 1002-1025 (AKDDGTQPSMLTSPSQSLSPDRQP) is disordered. Over residues 1007 to 1021 (TQPSMLTSPSQSLSP) the composition is skewed to polar residues. The EGF-like 4 domain occupies 1212–1253 (SAHPCARDNGGCSHICIAKGDGTPRCSCPVHLVLLQNLLTCG). 12 disulfides stabilise this stretch: Cys1216–Cys1227, Cys1223–Cys1237, Cys1239–Cys1252, Cys1258–Cys1272, Cys1265–Cys1285, Cys1279–Cys1294, Cys1297–Cys1309, Cys1304–Cys1322, Cys1316–Cys1331, Cys1335–Cys1347, Cys1342–Cys1360, and Cys1354–Cys1369. LDL-receptor class A domains follow at residues 1257–1295 (TCSP…EGCP), 1296–1332 (VCSA…ANCD), and 1334–1370 (VCLP…LMCE). Residues 1384 to 1406 (SAIGPVIGIILSLFVMGGVYFVC) traverse the membrane as a helical segment. At 1407–1614 (QRVMCQRYTG…PPPSPCTDSS (208 aa)) the chain is on the cytoplasmic side. The interval 1474–1498 (RNHVTGASSSSSSSTKATLYPPILN) is disordered. Positions 1499-1505 (PPPSPAT) match the PPPSP motif A motif. Residues 1537 to 1544 (PPTTPCST) carry the PPPSP motif B motif. Positions 1567–1599 (SDSDPYPPPPTPHSQYLSAEDSCPPSPGTERSY) are disordered. The short motif at 1573 to 1580 (PPPPTPHS) is the PPPSP motif C element. The PPPSP motif D signature appears at 1590–1595 (PPSPGT). The PPPSP motif E signature appears at 1604-1611 (PPPPSPCT).

This sequence belongs to the LDLR family. In terms of assembly, homodimer; disulfide-linked. Forms phosphorylated oligomer aggregates on Wnt-signaling. Component of a WNT-signaling complex that contains a WNT protein, a FZD protein and LRP5 or LRP6. Interacts with FZD8; the interaction is formed on WNT-binding and signaling. Interacts (via the phosphorylated PPPSP motif domains) with AXIN1; the interaction prevents inhibition of beta-catenin phosphorylation and signaling and is enhanced in the presence of GSK3B and WNT1 or WNT3A. Interacts (via beta-propeller regions 3 and 4) with DKK1; the interaction, enhanced by MESD and/or KREMEN, inhibits beta-catenin signaling by preventing GSK3-mediated phosphorylation of the PPPSP motifs and subsequent, AXIN1 binding. Interacts with CSNK1E. Interacts with SOST; the interaction antagonizes canonical Wnt signaling. Interacts with APCDD1. Interacts with MESD; the interaction prevents the formation of LRP5 aggregates, targets LRP5 to the plasma membrane and, when complexed with KREMEN2, increases DKK1 binding. Interacts with CAPRIN2. Phosphorylation of cytoplasmic PPPSP motifs regulates the signal transduction of the Wnt signaling pathway through acting as a docking site for AXIN1. In terms of tissue distribution, widely expressed, with the highest expression levels in liver, heart, and lung and the lowest levels in brain and spleen.

The protein localises to the membrane. The protein resides in the endoplasmic reticulum. In terms of biological role, acts as a coreceptor with members of the frizzled family of seven-transmembrane spanning receptors to transduce signal by Wnt proteins. Activates the canonical Wnt signaling pathway that controls cell fate determination and self-renewal during embryonic development and adult tissue regeneration. In particular, may play an important role in the development of the posterior patterning of the epiblast during gastrulation. During bone development, regulates osteoblast proliferation and differentiation thus determining bone mass. Mechanistically, the formation of the signaling complex between Wnt ligand, frizzled receptor and LRP5 coreceptor promotes the recruitment of AXIN1 to LRP5, stabilizing beta-catenin/CTNNB1 and activating TCF/LEF-mediated transcriptional programs. Acts as a coreceptor for non-Wnt proteins, such as norrin/NDP. Binding of norrin/NDP to frizzled 4/FZD4-LRP5 receptor complex triggers beta-catenin/CTNNB1-dependent signaling known to be required for retinal vascular development. Plays a role in controlling postnatal vascular regression in retina via macrophage-induced endothelial cell apoptosis. This is Low-density lipoprotein receptor-related protein 5 from Mus musculus (Mouse).